Here is a 174-residue protein sequence, read N- to C-terminus: 2-C-methyl-D-erythritol 2,4-cyclodiphosphate synthase (174 aa).

The a divalent metal cation site is built by aspartate 13, histidine 15, and histidine 61. A 4-CDP-2-C-methyl-D-erythritol 2-phosphate-binding site is contributed by 13 to 15 (DAH). 4-CDP-2-C-methyl-D-erythritol 2-phosphate contacts are provided by residues 75–77 (DIG), 149–152 (TTTD), phenylalanine 156, and histidine 159.

It belongs to the IspF family. In terms of assembly, homotrimer. A divalent metal cation serves as cofactor.

It catalyses the reaction 4-CDP-2-C-methyl-D-erythritol 2-phosphate = 2-C-methyl-D-erythritol 2,4-cyclic diphosphate + CMP. Its pathway is isoprenoid biosynthesis; isopentenyl diphosphate biosynthesis via DXP pathway; isopentenyl diphosphate from 1-deoxy-D-xylulose 5-phosphate: step 4/6. Functionally, involved in the biosynthesis of isopentenyl diphosphate (IPP) and dimethylallyl diphosphate (DMAPP), two major building blocks of isoprenoid compounds. Catalyzes the conversion of 4-diphosphocytidyl-2-C-methyl-D-erythritol 2-phosphate (CDP-ME2P) to 2-C-methyl-D-erythritol 2,4-cyclodiphosphate (ME-CPP) with a corresponding release of cytidine 5-monophosphate (CMP). The polypeptide is 2-C-methyl-D-erythritol 2,4-cyclodiphosphate synthase (Bifidobacterium longum (strain NCC 2705)).